Here is a 187-residue protein sequence, read N- to C-terminus: Adenylate kinase (187 aa).

Residue 10-15 (GSGKGT) participates in ATP binding. An NMP region spans residues 30 to 59 (STGDLLRAEVAAGSPLGLKAKEVMARGDLV). AMP is bound by residues Thr31, Arg36, 57–59 (DLV), 85–88 (GYPR), and Gln92. Residues 126 to 136 (GRAKAEGREDD) form an LID region. Residue Arg127 coordinates ATP. Arg133 and Arg144 together coordinate AMP. Position 172 (Gly172) interacts with ATP.

Belongs to the adenylate kinase family. Monomer.

Its subcellular location is the cytoplasm. The enzyme catalyses AMP + ATP = 2 ADP. It functions in the pathway purine metabolism; AMP biosynthesis via salvage pathway; AMP from ADP: step 1/1. In terms of biological role, catalyzes the reversible transfer of the terminal phosphate group between ATP and AMP. Plays an important role in cellular energy homeostasis and in adenine nucleotide metabolism. The sequence is that of Adenylate kinase from Xanthomonas oryzae pv. oryzae (strain MAFF 311018).